Reading from the N-terminus, the 339-residue chain is DNA-directed RNA polymerase subunit alpha (339 aa).

The interval 1–235 is alpha N-terminal domain (alpha-NTD); sequence MVIQKNWQEL…DQLQIFVNFE (235 aa). An alpha C-terminal domain (alpha-CTD) region spans residues 251-339; the sequence is FNPALLKKVD…DLAKRFEEHY (89 aa).

It belongs to the RNA polymerase alpha chain family. As to quaternary structure, homodimer. The RNAP catalytic core consists of 2 alpha, 1 beta, 1 beta' and 1 omega subunit. When a sigma factor is associated with the core the holoenzyme is formed, which can initiate transcription.

It catalyses the reaction RNA(n) + a ribonucleoside 5'-triphosphate = RNA(n+1) + diphosphate. Functionally, DNA-dependent RNA polymerase catalyzes the transcription of DNA into RNA using the four ribonucleoside triphosphates as substrates. This chain is DNA-directed RNA polymerase subunit alpha, found in Methylobacterium sp. (strain 4-46).